The primary structure comprises 186 residues: UPF0301 protein Nmul_A2478 (186 aa).

Belongs to the UPF0301 (AlgH) family.

This is UPF0301 protein Nmul_A2478 from Nitrosospira multiformis (strain ATCC 25196 / NCIMB 11849 / C 71).